A 149-amino-acid polypeptide reads, in one-letter code: Hydrogenase expression/formation protein HupT (149 aa).

It belongs to the HupJ family.

The sequence is that of Hydrogenase expression/formation protein HupT (hupT) from Azotobacter chroococcum mcd 1.